The primary structure comprises 357 residues: GDSL esterase/lipase At5g45950 (357 aa).

An N-terminal signal peptide occupies residues 1–23 (MLLVAFVTLLVAVALQPLPSVLS). A glycan (N-linked (GlcNAc...) asparagine) is linked at asparagine 37. Catalysis depends on serine 47, which acts as the Nucleophile. Residue asparagine 132 is glycosylated (N-linked (GlcNAc...) asparagine). Residues aspartate 331 and histidine 334 contribute to the active site.

The protein belongs to the 'GDSL' lipolytic enzyme family.

The protein localises to the secreted. The polypeptide is GDSL esterase/lipase At5g45950 (Arabidopsis thaliana (Mouse-ear cress)).